The primary structure comprises 251 residues: MLTFVGLGLWDVKDISVKGLEAVREADEVYVEYYTSKLLSSIEEMEEFFGKRVVELERSDLEENSFRLIERAKSKSVVLLVPGDPMVATTHSAIKLEAERKGVKTRIIHGASISTAVCGLTGLHNYRFGKSATVSWHRSQTPVNVIKANRSIDAHTLLFLDLHPEPMTIGHAVENLIAEDAQMKDLYAVGIARAGSGEEVVKCDRLENLKKIDFGKPLHVMVVLAKTLHFMEFECLREFADAPAELERLVA.

S-adenosyl-L-methionine-binding positions include Leu9, Asp84, Val87, 112–113, Leu160, Ala194, and His219; that span reads SI.

This sequence belongs to the diphthine synthase family. In terms of assembly, homodimer.

It catalyses the reaction 2-[(3S)-amino-3-carboxypropyl]-L-histidyl-[translation elongation factor 2] + 3 S-adenosyl-L-methionine = diphthine-[translation elongation factor 2] + 3 S-adenosyl-L-homocysteine + 3 H(+). Its pathway is protein modification; peptidyl-diphthamide biosynthesis. Its function is as follows. S-adenosyl-L-methionine-dependent methyltransferase that catalyzes the trimethylation of the amino group of the modified target histidine residue in translation elongation factor 2 (EF-2), to form an intermediate called diphthine. The three successive methylation reactions represent the second step of diphthamide biosynthesis. The protein is Diphthine synthase of Archaeoglobus fulgidus (strain ATCC 49558 / DSM 4304 / JCM 9628 / NBRC 100126 / VC-16).